The primary structure comprises 176 residues: 2-oxo-4-hydroxy-4-carboxy-5-ureidoimidazoline decarboxylase (176 aa).

Residue His-70 is the Proton donor; for OHCU decarboxylase activity of the active site. Residues Pro-71, Ser-83–Gln-87, and Phe-118–Val-122 contribute to the substrate site. Residues Asp-72 to Pro-96 are disordered.

It belongs to the OHCU decarboxylase family.

The enzyme catalyses 5-hydroxy-2-oxo-4-ureido-2,5-dihydro-1H-imidazole-5-carboxylate + H(+) = (S)-allantoin + CO2. It participates in purine metabolism; urate degradation; (S)-allantoin from urate: step 3/3. Catalyzes the stereoselective decarboxylation of 2-oxo-4-hydroxy-4-carboxy-5-ureidoimidazoline (OHCU) to (S)-allantoin. In Halalkalicoccus jeotgali (strain DSM 18796 / CECT 7217 / JCM 14584 / KCTC 4019 / B3), this protein is 2-oxo-4-hydroxy-4-carboxy-5-ureidoimidazoline decarboxylase.